Consider the following 59-residue polypeptide: Large ribosomal subunit protein uL30 (59 aa).

This sequence belongs to the universal ribosomal protein uL30 family. As to quaternary structure, part of the 50S ribosomal subunit.

The chain is Large ribosomal subunit protein uL30 from Ectopseudomonas mendocina (strain ymp) (Pseudomonas mendocina).